Here is a 688-residue protein sequence, read N- to C-terminus: DNA topoisomerase 1 (688 aa).

One can recognise a Toprim domain in the interval 3-113; the sequence is ENLVIVESPA…TENRVVFNEI (111 aa). 2 residues coordinate Mg(2+): Glu9 and Asp82. Residues 129 to 556 enclose the Topo IA-type catalytic domain; the sequence is EMELVDAQQA…FYSSFKQDVE (428 aa). Residues 163–168 form an interaction with DNA region; it reads SAGRVQ. Tyr298 functions as the O-(5'-phospho-DNA)-tyrosine intermediate in the catalytic mechanism. Residues 322 to 349 are disordered; sequence YGNDYTSNRKSKGQGDQDAHEAIRPSST. Residues 334–344 are compositionally biased toward basic and acidic residues; sequence GQGDQDAHEAI. C4-type zinc fingers lie at residues 576-602, 616-644, and 657-680; these read CEVCGSPMVIKMGRYGKFMACSNFPDC, CPKCKEGDVVERKSKKNRIFYGCSKYPEC, and CPKCEHYLVEKKQGRKSQVVCSNC.

This sequence belongs to the type IA topoisomerase family. As to quaternary structure, monomer. The cofactor is Mg(2+).

It carries out the reaction ATP-independent breakage of single-stranded DNA, followed by passage and rejoining.. Releases the supercoiling and torsional tension of DNA, which is introduced during the DNA replication and transcription, by transiently cleaving and rejoining one strand of the DNA duplex. Introduces a single-strand break via transesterification at a target site in duplex DNA. The scissile phosphodiester is attacked by the catalytic tyrosine of the enzyme, resulting in the formation of a DNA-(5'-phosphotyrosyl)-enzyme intermediate and the expulsion of a 3'-OH DNA strand. The free DNA strand then undergoes passage around the unbroken strand, thus removing DNA supercoils. Finally, in the religation step, the DNA 3'-OH attacks the covalent intermediate to expel the active-site tyrosine and restore the DNA phosphodiester backbone. This chain is DNA topoisomerase 1, found in Staphylococcus saprophyticus subsp. saprophyticus (strain ATCC 15305 / DSM 20229 / NCIMB 8711 / NCTC 7292 / S-41).